A 387-amino-acid chain; its full sequence is MANNDFLFTSESVSEGHPDKVADQISDAILDAIFTQDPNARVAAETLCNTGLVVLAGEITTTANVDYIQVARDTIRRIGYDNTDYGIDYKGCAVLVAYDKQSPDIAQGVDRKSEDYLNQGAGDQGLMFGYACDETPDLMPAPIWYAHRLVQRQSELRKDGRLPWLRPDAKSQVTFRYVDGRPVEVDTVVLSTQHAPEISQSAIHEAVIEDIIKPSFPEGLITPRTKFLVNPTGRFVIGGPQGDCGLTGRKIIVDTYGGACPHGGGAFSGKDPSKVDRSAAYAARYVAKNVVAAGLARQCQVQVSYAIGVAEPINITVYTEGTGVIPDEQIAKLVREHFDLRPKGIVNMLDLLRPIYAKTAAYGHFGRAEPEFSWEATDKALELKKSA.

His17 is a binding site for ATP. Asp19 is a binding site for Mg(2+). Glu45 serves as a coordination point for K(+). 2 residues coordinate L-methionine: Glu58 and Gln101. The interval 101–111 (QSPDIAQGVDR) is flexible loop. ATP is bound by residues 168-170 (DAK), 234-235 (RF), Asp243, 249-250 (RK), Ala266, and Lys270. Asp243 lines the L-methionine pocket. Lys274 is a binding site for L-methionine.

Belongs to the AdoMet synthase family. Homotetramer; dimer of dimers. It depends on Mg(2+) as a cofactor. K(+) is required as a cofactor.

It is found in the cytoplasm. The catalysed reaction is L-methionine + ATP + H2O = S-adenosyl-L-methionine + phosphate + diphosphate. Its pathway is amino-acid biosynthesis; S-adenosyl-L-methionine biosynthesis; S-adenosyl-L-methionine from L-methionine: step 1/1. Functionally, catalyzes the formation of S-adenosylmethionine (AdoMet) from methionine and ATP. The overall synthetic reaction is composed of two sequential steps, AdoMet formation and the subsequent tripolyphosphate hydrolysis which occurs prior to release of AdoMet from the enzyme. In Bordetella petrii (strain ATCC BAA-461 / DSM 12804 / CCUG 43448), this protein is S-adenosylmethionine synthase.